A 133-amino-acid polypeptide reads, in one-letter code: ATP synthase epsilon chain, sodium ion specific (133 aa).

It belongs to the ATPase epsilon chain family. In terms of assembly, F-type ATPases have 2 components, CF(1) - the catalytic core - and CF(0) - the membrane proton channel. CF(1) has five subunits: alpha(3), beta(3), gamma(1), delta(1), epsilon(1). CF(0) has three main subunits: a, b and c.

It localises to the cell membrane. Inhibited by nitrate. Produces ATP from ADP in the presence of a sodium gradient across the membrane. This chain is ATP synthase epsilon chain, sodium ion specific (atpC), found in Acetobacterium woodii (strain ATCC 29683 / DSM 1030 / JCM 2381 / KCTC 1655 / WB1).